A 218-amino-acid polypeptide reads, in one-letter code: MFWSKKPLDLPTPETALKGRPDAIPTARLHHVNQNPLKGPYPDGFRTAIFALGCFWGAERAFWRTPGVWVTAVGYLAGLTPNPTYEEVCSGRTGHTEGVLVVYDPAVISYADLVKLFFESHDPTQGMRQGNDVGTQYRSGIYTSDPQEKAVAEAVKASYEAALKAKGFGPITTEIIDGGPFYFAEDYHQQYLSKNPGGYCGLGGTGVSCPIGVGVAAQ.

Residue C54 is part of the active site.

This sequence belongs to the MsrA Met sulfoxide reductase family.

It carries out the reaction L-methionyl-[protein] + [thioredoxin]-disulfide + H2O = L-methionyl-(S)-S-oxide-[protein] + [thioredoxin]-dithiol. It catalyses the reaction [thioredoxin]-disulfide + L-methionine + H2O = L-methionine (S)-S-oxide + [thioredoxin]-dithiol. Its function is as follows. Has an important function as a repair enzyme for proteins that have been inactivated by oxidation. Catalyzes the reversible oxidation-reduction of methionine sulfoxide in proteins to methionine. The protein is Peptide methionine sulfoxide reductase MsrA of Azorhizobium caulinodans (strain ATCC 43989 / DSM 5975 / JCM 20966 / LMG 6465 / NBRC 14845 / NCIMB 13405 / ORS 571).